A 116-amino-acid polypeptide reads, in one-letter code: NADH-ubiquinone oxidoreductase chain 3 (116 aa).

A run of 3 helical transmembrane segments spans residues 3–23, 56–76, and 84–104; these read LVTTIITITITLSAVLATISF, FFLIAILFLLFDLEIALLLPL, and APTLTLLWSTAVLALLTLGLI.

The protein belongs to the complex I subunit 3 family.

It localises to the mitochondrion membrane. It carries out the reaction a ubiquinone + NADH + 5 H(+)(in) = a ubiquinol + NAD(+) + 4 H(+)(out). Core subunit of the mitochondrial membrane respiratory chain NADH dehydrogenase (Complex I) that is believed to belong to the minimal assembly required for catalysis. Complex I functions in the transfer of electrons from NADH to the respiratory chain. The immediate electron acceptor for the enzyme is believed to be ubiquinone. The protein is NADH-ubiquinone oxidoreductase chain 3 (MT-ND3) of Oncorhynchus nerka (Sockeye salmon).